The chain runs to 641 residues: Probable potassium transport system protein Kup (641 aa).

Residues 1-14 (MALDSESSASNRQG) are compositionally biased toward polar residues. The segment at 1-20 (MALDSESSASNRQGSRNEQD) is disordered. The next 12 helical transmembrane spans lie at 29 to 49 (LCLTALGVVYGDIATSPLYAF), 69 to 89 (ILSLIFWALIILVSIKYLLII), 120 to 140 (VLIVLGLFGAALLYGDGMITP), 156 to 176 (PQLTSYIIPATTVILVLLFMV), 188 to 208 (FGPIMLVWFVVIALLGLNGII), 236 to 256 (VLGGVFLALTGAEALYADMGH), 267 to 287 (FALVLPALLLNYFGQGALLLL), 307 to 327 (LVGLATLATIIASQAIISGVF), 355 to 375 (VYVPAANWFMMIAAVWLVLHF), 384 to 404 (AFGIAVSGTMVITTILAFFVM), 410 to 430 (WNILTAVAVTVGFLIIDLAFF), and 437 to 457 (ITDGGWFPLAIAVFIFTLMIT).

It belongs to the HAK/KUP transporter (TC 2.A.72) family.

Its subcellular location is the cell inner membrane. The catalysed reaction is K(+)(in) + H(+)(in) = K(+)(out) + H(+)(out). Transport of potassium into the cell. Likely operates as a K(+):H(+) symporter. The sequence is that of Probable potassium transport system protein Kup from Nitrosomonas eutropha (strain DSM 101675 / C91 / Nm57).